The chain runs to 948 residues: Non-lysosomal glucosylceramidase (948 aa).

Residues 1-736 (MAEPLAVETK…VMDGPSAYCS (736 aa)) lie on the Extracellular side of the membrane. Residues 177–195 (STRDKTSDPDGDPDGERTK) show a composition bias toward basic and acidic residues. Residues 177–197 (STRDKTSDPDGDPDGERTKCQ) form a disordered region. Asn200 carries N-linked (GlcNAc...) asparagine glycosylation. Ser214 is subject to Phosphoserine. N-linked (GlcNAc...) asparagine glycans are attached at residues Asn288, Asn555, and Asn629. 2 positions are modified to phosphoserine: Ser667 and Ser669. An N-linked (GlcNAc...) asparagine glycan is attached at Asn673. A helical membrane pass occupies residues 737-753 (GLWLAALQAMSAMATIL). Topologically, residues 754 to 948 (DQPNDCLRYQ…ALERRRAQRD (195 aa)) are cytoplasmic.

It belongs to the non-lysosomal glucosylceramidase family.

The protein localises to the cell membrane. It catalyses the reaction a beta-D-glucosyl-(1&lt;-&gt;1')-N-acylsphing-4-enine + H2O = an N-acylsphing-4-enine + D-glucose. Its function is as follows. Non-lysosomal glucosylceramidase that catalyzes the conversion of glucosylceramide to free glucose and ceramide. This is Non-lysosomal glucosylceramidase from Drosophila melanogaster (Fruit fly).